A 316-amino-acid chain; its full sequence is UDP-N-acetylenolpyruvoylglucosamine reductase (316 aa).

In terms of domain architecture, FAD-binding PCMH-type spans 27–225; that stretch reads VGGKAERFYR…KTAINALLKK (199 aa). Arginine 190 is a catalytic residue. The active-site Proton donor is serine 239. Glutamate 309 is an active-site residue.

It belongs to the MurB family. It depends on FAD as a cofactor.

Its subcellular location is the cytoplasm. The catalysed reaction is UDP-N-acetyl-alpha-D-muramate + NADP(+) = UDP-N-acetyl-3-O-(1-carboxyvinyl)-alpha-D-glucosamine + NADPH + H(+). It functions in the pathway cell wall biogenesis; peptidoglycan biosynthesis. Its function is as follows. Cell wall formation. The protein is UDP-N-acetylenolpyruvoylglucosamine reductase of Coxiella burnetii (strain CbuG_Q212) (Coxiella burnetii (strain Q212)).